A 41-amino-acid polypeptide reads, in one-letter code: Alpha-conotoxin CIB (41 aa).

The propeptide occupies 1–21 (SDGRNEAANDEASDVIELALK). 2 disulfide bridges follow: Cys-23–Cys-29 and Cys-24–Cys-37. Positions 25–27 (SNP) are ser-Xaa-Pro motif, crucial for potent interaction with nAChR. Position 37 is a cysteine amide (Cys-37).

It belongs to the conotoxin A superfamily. Expressed by the venom duct.

It is found in the secreted. Functionally, alpha-conotoxins act on postsynaptic membranes, they bind to the nicotinic acetylcholine receptors (nAChR) and thus inhibit them. This toxin blocks rat neuronal nAChR alpha-3-beta-2/CHRNA3-CHRNB2 (IC(50)=128.9 nM) and alpha-7/CHRNA7 (IC(50)=1511 nM). In vivo, intramuscular injection into zebrafish does not produce any effect on the locomotion of zebrafish. In Conus catus (Cat cone), this protein is Alpha-conotoxin CIB.